We begin with the raw amino-acid sequence, 492 residues long: Glycylpeptide N-tetradecanoyltransferase 2 (492 aa).

Residues 1 to 77 (MAEDSESAAS…SASDSQEIKN (77 aa)) form a disordered region. Over residues 15 to 32 (ELDDQDTCGIDGDNEEEN) the composition is skewed to acidic residues. Residues 46-57 (KKKKKKQKRKKE) are compositionally biased toward basic residues. The segment covering 61–72 (SGGTKSDSASDS) has biased composition (polar residues). Residues histidine 111, tryptophan 116, leucine 244, valine 246, serine 252, arginine 254, valine 255, and alanine 256 each coordinate tetradecanoyl-CoA.

It belongs to the NMT family.

It is found in the cytoplasm. Its subcellular location is the membrane. It catalyses the reaction N-terminal glycyl-[protein] + tetradecanoyl-CoA = N-tetradecanoylglycyl-[protein] + CoA + H(+). The catalysed reaction is N-terminal glycyl-L-lysyl-[protein] + tetradecanoyl-CoA = N-terminal glycyl-(N(6)-tetradecanoyl)-L-lysyl-[protein] + CoA + H(+). Adds a myristoyl group to the N-terminal glycine residue of certain cellular and viral proteins. Also able to mediate N-terminal lysine myristoylation of proteins. This Danio rerio (Zebrafish) protein is Glycylpeptide N-tetradecanoyltransferase 2.